The chain runs to 428 residues: C4-dicarboxylate transport protein (428 aa).

9 helical membrane passes run 4–24 (SLFK…ILLG), 44–64 (LIKM…IAGM), 76–96 (VALL…LIIV), 142–162 (IGAF…LFGF), 184–204 (VIFG…FGAM), 222–242 (LIIC…GTIA), 289–309 (VVGL…SIYL), 326–346 (IFHQ…AAGV), and 352–372 (IVLA…LALI).

This sequence belongs to the dicarboxylate/amino acid:cation symporter (DAACS) (TC 2.A.23) family.

It is found in the cell inner membrane. Its function is as follows. Responsible for the transport of dicarboxylates such as succinate, fumarate, and malate from the periplasm across the membrane. In Salmonella arizonae (strain ATCC BAA-731 / CDC346-86 / RSK2980), this protein is C4-dicarboxylate transport protein.